A 1478-amino-acid polypeptide reads, in one-letter code: FYVE and coiled-coil domain-containing protein 1 (1478 aa).

Ala-2 is modified (N-acetylalanine). The stretch at 4 to 33 (TNAESQLQRIIRDLQDAVTELSKEFQEAGE) forms a coiled coil. An RUN domain is found at 36–169 (TDDSTSLHKF…VQFDLASRGF (134 aa)). Ser-196 is modified (phosphoserine). Residues 225 to 280 (NNEALEGFDEMRLELDQLEVREKQLRERMQQLDRENQELRAAVSQQGEQLQTERER) are a coiled coil. Ser-342 carries the phosphoserine modification. Thr-381 bears the Phosphothreonine mark. Coiled-coil stretches lie at residues 394–555 (SDAA…MLER) and 596–1151 (QEAQ…KDAL). The tract at residues 586–613 (GKPEEEQRGLQEAQLDDTKVQEGSQEEE) is disordered. Ser-878 carries the phosphoserine modification. The FYVE-type zinc-finger motif lies at 1173 to 1231 (DTEANHCLDCKREFSWMVRRHHCRICGRIFCYYCCNNYVLSKHGGKKERCCRACFQKLS). Residues Cys-1179, Cys-1182, Cys-1195, Cys-1198, Cys-1203, Cys-1206, Cys-1223, and Cys-1226 each coordinate Zn(2+). Positions 1231-1261 (SEGPGSPDSSGSGTSQGEPSPALSPASPGPQ) are enriched in low complexity. Disordered regions lie at residues 1231 to 1277 (SEGP…PPDD) and 1294 to 1332 (SGSSLPETPTETDSLDPNAAEQDTTSTSLTPEDTEDMPV). 2 stretches are compositionally biased toward polar residues: residues 1294–1305 (SGSSLPETPTET) and 1314–1324 (EQDTTSTSLTP). A GOLD domain is found at 1337–1466 (EICLLKSGEL…SKKVFYHLTV (130 aa)).

In terms of assembly, can form homodimers. Interacts (via C-terminus) with MAP1LC3B. Interacts with RAB7A; the interaction with RAB7A induces FYCO1 recruitment to late endosomal/lysosomal compartments. Interacts with MAP1LC3B. As to expression, expressed in heart and skeletal muscle.

The protein localises to the cytoplasmic vesicle. It localises to the autophagosome. Its subcellular location is the endosome. It is found in the lysosome. May mediate microtubule plus end-directed vesicle transport. This Homo sapiens (Human) protein is FYVE and coiled-coil domain-containing protein 1 (FYCO1).